The sequence spans 142 residues: Large ribosomal subunit protein uL13 (142 aa).

Belongs to the universal ribosomal protein uL13 family. In terms of assembly, part of the 50S ribosomal subunit.

Its function is as follows. This protein is one of the early assembly proteins of the 50S ribosomal subunit, although it is not seen to bind rRNA by itself. It is important during the early stages of 50S assembly. In Cupriavidus necator (strain ATCC 17699 / DSM 428 / KCTC 22496 / NCIMB 10442 / H16 / Stanier 337) (Ralstonia eutropha), this protein is Large ribosomal subunit protein uL13.